The primary structure comprises 75 residues: Large ribosomal subunit protein bL31 (75 aa).

It belongs to the bacterial ribosomal protein bL31 family. Type A subfamily. In terms of assembly, part of the 50S ribosomal subunit.

In terms of biological role, binds the 23S rRNA. The chain is Large ribosomal subunit protein bL31 from Gluconobacter oxydans (strain 621H) (Gluconobacter suboxydans).